A 424-amino-acid polypeptide reads, in one-letter code: CinA-like protein (424 aa).

Belongs to the CinA family.

The sequence is that of CinA-like protein from Shewanella sediminis (strain HAW-EB3).